Consider the following 310-residue polypeptide: Iron ABC transporter substrate-binding lipoprotein MtsA (310 aa).

The signal sequence occupies residues 1 to 20 (MGKRMSLILGAFLSVFLLVA). Residue Cys-21 is the site of N-palmitoyl cysteine attachment. Cys-21 is lipidated: S-diacylglycerol cysteine. Positions 68, 140, 206, and 281 each coordinate Fe(2+).

Belongs to the bacterial solute-binding protein 9 family. Lipoprotein receptor antigen (Lrai) subfamily.

The protein resides in the cell membrane. Part of the ATP-binding cassette (ABC) transport system MtsABC involved in iron import. Binds iron with high affinity and specificity and delivers it to the membrane permease for translocation into the cytoplasm. Has low affinity for Zn(2+) and Cu(2+). The polypeptide is Iron ABC transporter substrate-binding lipoprotein MtsA (mtsA) (Streptococcus pyogenes serotype M1).